The primary structure comprises 868 residues: MASLDNLVARYQRCFNDQSLKNSTIELEIRFQQINFLLFKTVYEALVAQEIPSTISHSIRCIKKVHHENHCREKILPSENFYFKKQPLMFFKFSEPASLGCKVSLAIEQPIRKFILDSSVLVRLKNRTTFRVSELWKIELTIVKQLMGSEVSAKLTAFKTLLFDTPEQQTTKNMMSLINPDDEYLYEIEIEYTGKPESLTAADVIKIKNTVLTLISPNHLMLTAYHQAIEFIASHILSSEILLARIKSGKWGLKRLLPQVKSMTKADYMKFYPPVGYYITDKADGIRGIAVIQDTQIYVVADQLYSLGTTGIEPLKPTILDGEFMPEKKEFYGFDVIMYEGNLLTQQGFETRIETLSKGIKVLQAFNIKAEMKPFISLTSADPNVLLKNFESIFKKKTRPYSIDGIILVEPGNSYLNTNTFKWKPTWDNTLDFLVRKCPESLNVPEYAPKKGFSLHLLFVGISGELFKKLALNWCPGYTKLFPVTQRNQNYFPVQFQPSDFPLAFLYYHPDTSSFSDIDGKVLEMRCLKREINHVSWEIVKIREDRQQDLKTGGYFGNDFKTAELTWLNYMDPFSFEELAKGPSGMYFAGAKTGIYRAQTALISFIKQEIIQKISHQSWVIDLGIGKGQDLGRYLDAGVRHLVGIDKDQTALAELVYRKFSHATTRQHKHATNIYVLHQDLAEPAKEISEKVHQIYGFPKEGASSIVSNLFIHYLMKNTQQVENLAVLCHKLLQPGGMVWFTTMLGERVLELLHENRIELNEVWEARENEVVKFAIKRLFKEDILQETGQEIGVLLPFSNGDFYNEYLVNTAFLIKIFKHHGFSLVQKQSFKDWIPEFQNFSKSLYKILTEADKTWTSLFGFICLRKN.

The active-site N6-GMP-lysine intermediate is lysine 282. Positions 594–868 constitute an mRNA cap 0 methyltransferase domain; the sequence is GIYRAQTALI…LFGFICLRKN (275 aa). S-adenosyl-L-methionine contacts are provided by residues lysine 607, glycine 624, aspartate 646, and 710–712; that span reads LFI.

In the N-terminal section; belongs to the dsDNA virus mRNA guanylyltransferase family. It in the C-terminal section; belongs to the class I-like SAM-binding methyltransferase superfamily. mRNA cap 0 methyltransferase family. As to quaternary structure, part of the viral DNA-directed RNA polymerase that consists of 8 polII-like subunits (RPB1, RPB2, RPB3, RPB5, RPB6, RPB7, RPB9, RPB10), a capping enzyme and a termination factor.

The protein resides in the virion. The catalysed reaction is a 5'-end triphospho-ribonucleoside in mRNA + H2O = a 5'-end diphospho-ribonucleoside in mRNA + phosphate + H(+). It carries out the reaction a 5'-end diphospho-ribonucleoside in mRNA + GTP + H(+) = a 5'-end (5'-triphosphoguanosine)-ribonucleoside in mRNA + diphosphate. The enzyme catalyses a 5'-end (5'-triphosphoguanosine)-ribonucleoside in mRNA + S-adenosyl-L-methionine = a 5'-end (N(7)-methyl 5'-triphosphoguanosine)-ribonucleoside in mRNA + S-adenosyl-L-homocysteine. It functions in the pathway mRNA processing; mRNA capping. Functionally, probably catalyzes the second reaction in the mRNA cap formation pathway. Forms a covalent complex with GTP. The sequence is that of mRNA-capping enzyme from African swine fever virus (isolate Tick/South Africa/Pretoriuskop Pr4/1996) (ASFV).